Consider the following 468-residue polypeptide: ATP synthase subunit beta (468 aa).

148-155 contacts ATP; that stretch reads GGAGVGKT.

Belongs to the ATPase alpha/beta chains family. In terms of assembly, F-type ATPases have 2 components, CF(1) - the catalytic core - and CF(0) - the membrane proton channel. CF(1) has five subunits: alpha(3), beta(3), gamma(1), delta(1), epsilon(1). CF(0) has three main subunits: a(1), b(2) and c(9-12). The alpha and beta chains form an alternating ring which encloses part of the gamma chain. CF(1) is attached to CF(0) by a central stalk formed by the gamma and epsilon chains, while a peripheral stalk is formed by the delta and b chains.

Its subcellular location is the cell inner membrane. The catalysed reaction is ATP + H2O + 4 H(+)(in) = ADP + phosphate + 5 H(+)(out). Produces ATP from ADP in the presence of a proton gradient across the membrane. The catalytic sites are hosted primarily by the beta subunits. This is ATP synthase subunit beta from Xanthomonas euvesicatoria pv. vesicatoria (strain 85-10) (Xanthomonas campestris pv. vesicatoria).